A 74-amino-acid polypeptide reads, in one-letter code: MSKDKKNKVEQLEPVDLFERTKLEDTQVLNDVELDDIKKLEELKKELENTFEPRTRIEIKREIKELERKLRRNR.

It to U.parvum UU416.

This is an uncharacterized protein from Mycoplasma pneumoniae (strain ATCC 29342 / M129 / Subtype 1) (Mycoplasmoides pneumoniae).